Reading from the N-terminus, the 237-residue chain is Zinc finger AN1 domain-containing stress-associated protein 14 (237 aa).

Positions 1–31 (MATKRKCPANGDDGGVADLEPVAGGSFASPP) are disordered. The AN1-type zinc-finger motif lies at 171-217 (QPEANRCATCRRKVGLTGFKCRCGGTFCGGHRYADEHGCGFDYKSSG). Zn(2+)-binding residues include Cys-177, Cys-180, Cys-191, Cys-193, Cys-198, His-201, His-207, and Cys-209.

In terms of biological role, may be involved in environmental stress response. The sequence is that of Zinc finger AN1 domain-containing stress-associated protein 14 (SAP14) from Oryza sativa subsp. japonica (Rice).